The primary structure comprises 322 residues: Peroxidase 66 (322 aa).

A signal peptide spans 1–24 (MAFSKGLIFAMIFAVLAIVKPSEA). Cystine bridges form between cysteine 35-cysteine 114 and cysteine 68-cysteine 73. Histidine 66 serves as the catalytic Proton acceptor. Positions 67, 72, 74, and 76 each coordinate Ca(2+). Asparagine 155 is a glycosylation site (N-linked (GlcNAc...) asparagine). Proline 161 is a substrate binding site. Asparagine 166 carries N-linked (GlcNAc...) asparagine glycosylation. Histidine 191 is a binding site for heme b. Residue threonine 192 coordinates Ca(2+). A disulfide bridge links cysteine 198 with cysteine 230. The N-linked (GlcNAc...) asparagine glycan is linked to asparagine 207. Positions 245, 247, and 252 each coordinate Ca(2+).

The protein belongs to the peroxidase family. Classical plant (class III) peroxidase subfamily. Requires heme b as cofactor. Ca(2+) is required as a cofactor.

Its subcellular location is the secreted. The catalysed reaction is 2 a phenolic donor + H2O2 = 2 a phenolic radical donor + 2 H2O. In terms of biological role, removal of H(2)O(2), oxidation of toxic reductants, biosynthesis and degradation of lignin, suberization, auxin catabolism, response to environmental stresses such as wounding, pathogen attack and oxidative stress. These functions might be dependent on each isozyme/isoform in each plant tissue. The polypeptide is Peroxidase 66 (PER66) (Arabidopsis thaliana (Mouse-ear cress)).